A 364-amino-acid chain; its full sequence is Chaperone protein DnaJ 1 (364 aa).

Residues 7-71 (DYYEILGVNR…ERRSEYDAIL (65 aa)) form the J domain. Residues 124-200 (GCEKEIIYSR…CYGRGRVSAQ (77 aa)) form a CR-type zinc finger. Residues cysteine 137, cysteine 140, cysteine 154, cysteine 157, cysteine 174, cysteine 177, cysteine 188, and cysteine 191 each coordinate Zn(2+). CXXCXGXG motif repeat units lie at residues 137 to 144 (CPVCEGMG), 154 to 161 (CHACNGEG), 174 to 181 (CSVCKGKG), and 188 to 195 (CPTCYGRG).

This sequence belongs to the DnaJ family. Homodimer. It depends on Zn(2+) as a cofactor.

Its subcellular location is the cytoplasm. Functionally, participates actively in the response to hyperosmotic and heat shock by preventing the aggregation of stress-denatured proteins and by disaggregating proteins, also in an autonomous, DnaK-independent fashion. Unfolded proteins bind initially to DnaJ; upon interaction with the DnaJ-bound protein, DnaK hydrolyzes its bound ATP, resulting in the formation of a stable complex. GrpE releases ADP from DnaK; ATP binding to DnaK triggers the release of the substrate protein, thus completing the reaction cycle. Several rounds of ATP-dependent interactions between DnaJ, DnaK and GrpE are required for fully efficient folding. Also involved, together with DnaK and GrpE, in the DNA replication of plasmids through activation of initiation proteins. This is Chaperone protein DnaJ 1 from Aquifex aeolicus (strain VF5).